Reading from the N-terminus, the 317-residue chain is MALTELRIASRRSQLAMVQTNWVKAELEKAHPGLTITVEAMATQGDKILDVALAKIGDKGLFTKELEAQMLVGRAEIAVHSLKDLPTNLPEGLMLGCITEREDPADALVVNAKNANHKLDTLPEGAVVGTSSLRRLAQLRHHYPHLSFKDVRGNVITRLEKLDSGDYDCLILAAAGLERLGFGNRIHQIIPGDISLHAVGQGALGIECVEDKPEVLEIIKVLEHTTTSRRCLAERAFLRELEGGCQVPIGVNSQINNEELTLTGMVASLDGKRLIRDEASGSAADPESIGIELAGKLKHQGAGAILKEIFDEVRPEA.

Cysteine 245 carries the S-(dipyrrolylmethanemethyl)cysteine modification.

It belongs to the HMBS family. Monomer. Dipyrromethane serves as cofactor.

The enzyme catalyses 4 porphobilinogen + H2O = hydroxymethylbilane + 4 NH4(+). The protein operates within porphyrin-containing compound metabolism; protoporphyrin-IX biosynthesis; coproporphyrinogen-III from 5-aminolevulinate: step 2/4. It participates in porphyrin-containing compound metabolism; chlorophyll biosynthesis. Tetrapolymerization of the monopyrrole PBG into the hydroxymethylbilane pre-uroporphyrinogen in several discrete steps. In Parasynechococcus marenigrum (strain WH8102), this protein is Porphobilinogen deaminase.